The chain runs to 181 residues: MLLEPGRGCCALAILLAIVDIQSGGCINITSSASQEGTRLNLICTVWHKKEEAEGFVVFLCKDRSGDCSPETSLKQLRLKRDPGIDGVGEISSQLMFTISQVTPLHSGTYQCCARSQKSGIRLQGHFFSILFTETGNYTVTGLKQRQHLEFSHNEGTLSSGFLQEKVWVMLVTSLVALQAL.

An N-terminal signal peptide occupies residues 1-24 (MLLEPGRGCCALAILLAIVDIQSG). The Ig-like V-type domain maps to 25 to 133 (GCINITSSAS…QGHFFSILFT (109 aa)). N28 carries N-linked (GlcNAc...) asparagine glycosylation. 2 disulfide bridges follow: C44/C112 and C61/C68. A glycan (N-linked (GlcNAc...) asparagine) is linked at N137. The GPI-anchor amidated serine moiety is linked to residue S159. The propeptide at 160 to 181 (SGFLQEKVWVMLVTSLVALQAL) is removed in mature form.

In terms of assembly, homomultimer; disulfide-linked. Interacts with HLA-G. Interacts with HLA-A2-B2M in complex with an HIV-derived peptide. Interacts with TNFRSF14 (via cysteine-rich domain 1); this interaction is direct. Interacts with LCK and CD247/CD3 zeta chain. Expression is restricted to functional NK and cytotoxic T lymphocytes. Expressed in viral-specific effector memory and terminally differentiated effector memory CD8+ T cells. Expressed in memory and activated CD4+ T cell subsets (at protein level). Expressed at high levels in intraepithelial lymphocytes (at protein level). Expressed in both alpha-beta and gamma-delta CD8+ T cell subsets (at protein level). Expressed in umbilical vein endothelial cells (at protein level). Expressed in monocytes and at lower levels in B cells. Isoform 3: Expressed exclusively in activated NK cells (at protein level).

It is found in the cell membrane. It localises to the secreted. In terms of biological role, receptor on immune cells capable to deliver stimulatory or inhibitory signals that regulate cell activation and differentiation. Exists as a GPI-anchored and as a transmembrane form, each likely initiating distinct signaling pathways via phosphoinositol 3-kinase in activated NK cells and via LCK and CD247/CD3 zeta chain in activated T cells. Receptor for both classical and non-classical MHC class I molecules. In the context of acute viral infection, recognizes HLA-C and triggers NK cell cytotoxic activity, likely playing a role in anti-viral innate immune response. On CD8+ T cells, binds HLA-A2-B2M in complex with a viral peptide and provides a costimulatory signal to activated/memory T cells. Upon persistent antigen stimulation, such as occurs during chronic viral infection, may progressively inhibit TCR signaling in memory CD8+ T cells, contributing to T cell exhaustion. On endothelial cells, recognizes HLA-G and controls angiogenesis in immune privileged sites. Receptor or ligand for TNF superfamily member TNFRSF14, participating in bidirectional cell-cell contact signaling between antigen presenting cells and lymphocytes. Upon ligation of TNFRSF14, provides stimulatory signal to NK cells enhancing IFNG production and anti-tumor immune response. On activated CD4+ T cells, interacts with TNFRSF14 and down-regulates CD28 costimulatory signaling, restricting memory and alloantigen-specific immune response. In the context of bacterial infection, acts as a ligand for TNFRSF14 on epithelial cells, triggering the production of antimicrobial proteins and pro-inflammatory cytokines. Functionally, the soluble GPI-cleaved form, usually released by activated lymphocytes, might play an immune regulatory role by limiting lymphocyte effector functions. The chain is CD160 antigen from Homo sapiens (Human).